Reading from the N-terminus, the 362-residue chain is Peptide chain release factor 1 (362 aa).

An N5-methylglutamine modification is found at glutamine 232.

It belongs to the prokaryotic/mitochondrial release factor family. Methylated by PrmC. Methylation increases the termination efficiency of RF1.

The protein resides in the cytoplasm. Peptide chain release factor 1 directs the termination of translation in response to the peptide chain termination codons UAG and UAA. The sequence is that of Peptide chain release factor 1 from Myxococcus xanthus.